The chain runs to 425 residues: Enolase (425 aa).

(2R)-2-phosphoglycerate is bound at residue Q170. E214 serves as the catalytic Proton donor. Mg(2+)-binding residues include D250, E291, and D317. K342, R371, S372, and K393 together coordinate (2R)-2-phosphoglycerate. The Proton acceptor role is filled by K342.

This sequence belongs to the enolase family. The cofactor is Mg(2+).

The protein resides in the cytoplasm. It is found in the secreted. The protein localises to the cell surface. It carries out the reaction (2R)-2-phosphoglycerate = phosphoenolpyruvate + H2O. The protein operates within carbohydrate degradation; glycolysis; pyruvate from D-glyceraldehyde 3-phosphate: step 4/5. Functionally, catalyzes the reversible conversion of 2-phosphoglycerate (2-PG) into phosphoenolpyruvate (PEP). It is essential for the degradation of carbohydrates via glycolysis. This Methanococcoides burtonii (strain DSM 6242 / NBRC 107633 / OCM 468 / ACE-M) protein is Enolase.